The sequence spans 330 residues: Succinoglycan biosynthesis protein ExoA (330 aa).

The next 3 membrane-spanning stretches (helical) occupy residues 116–136 (ALATGADSVVVAMQTVGFSTF), 260–280 (IAFGALLAIVNWMAVVPVGVW), and 299–319 (YGPLAAVAAMVMHLAWSAGFW).

This sequence belongs to the glycosyltransferase 2 family.

The protein localises to the cell membrane. It participates in glycan metabolism; exopolysaccharide biosynthesis. In terms of biological role, glycosyltransferase required for the synthesis of succinoglycan (EPS I). Needed for the addition of the second sugar (glucose). Catalyzes the formation of a beta-1,3 linkage with the galactose lipid carrier. This Rhizobium meliloti (strain 1021) (Ensifer meliloti) protein is Succinoglycan biosynthesis protein ExoA (exoA).